A 154-amino-acid polypeptide reads, in one-letter code: SsrA-binding protein (154 aa).

The disordered stretch occupies residues 134–154; it reads DKREDIKKRDQERELSRRFKN.

This sequence belongs to the SmpB family.

It is found in the cytoplasm. Functionally, required for rescue of stalled ribosomes mediated by trans-translation. Binds to transfer-messenger RNA (tmRNA), required for stable association of tmRNA with ribosomes. tmRNA and SmpB together mimic tRNA shape, replacing the anticodon stem-loop with SmpB. tmRNA is encoded by the ssrA gene; the 2 termini fold to resemble tRNA(Ala) and it encodes a 'tag peptide', a short internal open reading frame. During trans-translation Ala-aminoacylated tmRNA acts like a tRNA, entering the A-site of stalled ribosomes, displacing the stalled mRNA. The ribosome then switches to translate the ORF on the tmRNA; the nascent peptide is terminated with the 'tag peptide' encoded by the tmRNA and targeted for degradation. The ribosome is freed to recommence translation, which seems to be the essential function of trans-translation. The polypeptide is SsrA-binding protein (Leuconostoc mesenteroides subsp. mesenteroides (strain ATCC 8293 / DSM 20343 / BCRC 11652 / CCM 1803 / JCM 6124 / NCDO 523 / NBRC 100496 / NCIMB 8023 / NCTC 12954 / NRRL B-1118 / 37Y)).